Here is a 465-residue protein sequence, read N- to C-terminus: UDP-N-acetylmuramate--L-alanine ligase (465 aa).

115-121 (GTHGKTT) serves as a coordination point for ATP.

It belongs to the MurCDEF family.

It localises to the cytoplasm. The enzyme catalyses UDP-N-acetyl-alpha-D-muramate + L-alanine + ATP = UDP-N-acetyl-alpha-D-muramoyl-L-alanine + ADP + phosphate + H(+). Its pathway is cell wall biogenesis; peptidoglycan biosynthesis. Cell wall formation. The chain is UDP-N-acetylmuramate--L-alanine ligase from Renibacterium salmoninarum (strain ATCC 33209 / DSM 20767 / JCM 11484 / NBRC 15589 / NCIMB 2235).